The primary structure comprises 593 residues: DEAD-box ATP-dependent RNA helicase 18 (593 aa).

Residues 16–44 (FSDLEPPLSGDIIEALNQSDFEFCTPVQA) carry the Q motif motif. Residues 47 to 226 (IPLLCSYKDV…KAGLRNPVRV (180 aa)) enclose the Helicase ATP-binding domain. 60–67 (AATGSGKT) contacts ATP. Residues 174 to 177 (DEAD) carry the DEAD box motif. The Helicase C-terminal domain occupies 264–411 (QLVDLLIKNS…ERKCSEDASD (148 aa)). The segment covering 506 to 524 (QRQQNLQVRKEKRQEEKKE) has biased composition (basic and acidic residues). Residues 506–561 (QRQQNLQVRKEKRQEEKKEKGKRKRVDASASNDPKKASRKLTGKQRQTIQTAEDEE) form a disordered region.

This sequence belongs to the DEAD box helicase family. DDX55/SPB4 subfamily.

The enzyme catalyses ATP + H2O = ADP + phosphate + H(+). This is DEAD-box ATP-dependent RNA helicase 18 (RH18) from Arabidopsis thaliana (Mouse-ear cress).